We begin with the raw amino-acid sequence, 198 residues long: Dual specificity protein phosphatase 13B (198 aa).

Residues 45–193 (HIDEVWPSLF…LQVLDNRLGR (149 aa)) form the Tyrosine-protein phosphatase domain. The Phosphocysteine intermediate role is filled by Cys-138.

Belongs to the protein-tyrosine phosphatase family. Non-receptor class dual specificity subfamily. Highly expressed in the testis (at protein level). Also found in the skeletal muscle.

It carries out the reaction O-phospho-L-tyrosyl-[protein] + H2O = L-tyrosyl-[protein] + phosphate. The enzyme catalyses O-phospho-L-seryl-[protein] + H2O = L-seryl-[protein] + phosphate. It catalyses the reaction O-phospho-L-threonyl-[protein] + H2O = L-threonyl-[protein] + phosphate. Functionally, dual specificity phosphatase that dephosphorylates MAPK8/JNK and MAPK14/p38, but not MAPK1/ERK2, in vitro. Exhibits intrinsic phosphatase activity towards both phospho-seryl/threonyl and -tyrosyl residues, with similar specific activities in vitro. This chain is Dual specificity protein phosphatase 13B, found in Homo sapiens (Human).